The sequence spans 140 residues: Photosystem I reaction center subunit XI (140 aa).

The next 3 helical transmembrane spans lie at 48-68 (LEIGMAHGYFLIGPFVQLGPL), 79-99 (LLSAIGLIVILTLGMLLYGAV), and 119-139 (SGFLLGAVGGAGFAYLLLTLF).

This sequence belongs to the PsaL family.

It localises to the plastid. Its subcellular location is the chloroplast thylakoid membrane. In Cyanidioschyzon merolae (strain NIES-3377 / 10D) (Unicellular red alga), this protein is Photosystem I reaction center subunit XI.